Consider the following 621-residue polypeptide: Phosphoenolpyruvate carboxykinase [GTP] (621 aa).

Residues R82 and Y220–G222 each bind substrate. Mn(2+)-binding residues include K229 and H249. S271 provides a ligand contact to substrate. Residue Q272–N277 coordinates GTP. C273 is an active-site residue. Residue D296 coordinates Mn(2+). N386–R388 contributes to the substrate binding site. GTP is bound by residues R388, R419, and F514 to N517.

It belongs to the phosphoenolpyruvate carboxykinase [GTP] family. As to quaternary structure, monomer. Requires Mn(2+) as cofactor.

The protein resides in the cytoplasm. The catalysed reaction is oxaloacetate + GTP = phosphoenolpyruvate + GDP + CO2. It participates in carbohydrate biosynthesis; gluconeogenesis. Its function is as follows. Catalyzes the conversion of oxaloacetate (OAA) to phosphoenolpyruvate (PEP), the rate-limiting step in the metabolic pathway that produces glucose from lactate and other precursors derived from the citric acid cycle. This is Phosphoenolpyruvate carboxykinase [GTP] from Corynebacterium kroppenstedtii (strain DSM 44385 / JCM 11950 / CIP 105744 / CCUG 35717).